A 132-amino-acid polypeptide reads, in one-letter code: T-cell receptor alpha chain V region CTL-F3 (132 aa).

An N-terminal signal peptide occupies residues 1-22 (MNMRPDTCSVLVLLLMLRRNNG). A v segment region spans residues 23-114 (DSVTQTEGLV…DSALYYCALS (92 aa)). N43 carries N-linked (GlcNAc...) asparagine glycosylation. A disulfide bridge links C44 with C111. Residues 115–132 (NAGAKLTFGGGTRLTVRP) are j segment.

This chain is T-cell receptor alpha chain V region CTL-F3, found in Mus musculus (Mouse).